Consider the following 123-residue polypeptide: Succinate dehydrogenase assembly factor 3, mitochondrial (123 aa).

A mitochondrion-targeting transit peptide spans 1 to 31 (MANPAHISAVRTLYKKILVLHRFLPIDLRAL).

Belongs to the complex I LYR family. SDHAF3 subfamily. Interacts with sdhb within an sdha-sdhb subcomplex.

It is found in the mitochondrion matrix. Its function is as follows. Plays an essential role in the assembly of succinate dehydrogenase (SDH), an enzyme complex (also referred to as respiratory complex II) that is a component of both the tricarboxylic acid (TCA) cycle and the mitochondrial electron transport chain, and which couples the oxidation of succinate to fumarate with the reduction of ubiquinone (coenzyme Q) to ubiquinol. Promotes maturation of the iron-sulfur protein subunit sdhb of the SDH catalytic dimer, protecting it from the deleterious effects of oxidants. May act together with SDHAF1. This chain is Succinate dehydrogenase assembly factor 3, mitochondrial, found in Danio rerio (Zebrafish).